Here is a 32-residue protein sequence, read N- to C-terminus: ATP synthase 28 kDa subunit, mitochondrial (32 aa).

Its subcellular location is the mitochondrion. The protein localises to the mitochondrion inner membrane. Functionally, mitochondrial membrane ATP synthase (F(1)F(0) ATP synthase or Complex V) produces ATP from ADP in the presence of a proton gradient across the membrane which is generated by electron transport complexes of the respiratory chain. F-type ATPases consist of two structural domains, F(1) - containing the extramembraneous catalytic core and F(0) - containing the membrane proton channel, linked together by a central stalk and a peripheral stalk. During catalysis, ATP synthesis in the catalytic domain of F(1) is coupled via a rotary mechanism of the central stalk subunits to proton translocation. Part of the complex F(0) domain. The polypeptide is ATP synthase 28 kDa subunit, mitochondrial (Spinacia oleracea (Spinach)).